Consider the following 451-residue polypeptide: MVFSDQQLFEKVVEILKPFDLSVVDYEEICDRMGESMRLGLQKSTNEKSSIKMFPSYVTKTPNGTETGNFLALDLGGTNYRVLSVTLEGKGKSPRIQERTYCIPAEKMSGSGTELFKYIAETLADFLENNGMKDKKFDLGFTFSFPCVQKGLTHATLVRWTKGFSADGVEGHNVAELLQTELDKRELNVKCVAVVNDTVGTLASCALEDPKCAVGLIVGTGTNVAYIEDSSKVELMDGVKEPEVVINTEWGAFGEKGELDCWRTQFDKSMDIDSLHPGKQLYEKMVSGMYLGELVRHIIVYLVEQKILFRGDLPERLKVRNSLLTRYLTDVERDPAHLLYNTHYMLTDDLHVPVVEPIDNRIVRYACEMVVKRAAYLAGAGIACILRRINRSEVTVGVDGSLYKFHPKFCERMTDMVDKLKPKNTRFCLRLSEDGSGKGAAAIAASCTRQN.

A Hexokinase domain is found at 6 to 445 (QQLFEKVVEI…SGKGAAAIAA (440 aa)). Residues 63-195 (NGTETGNFLA…ELNVKCVAVV (133 aa)) form a hexokinase small subdomain region. 74 to 79 (DLGGTN) serves as a coordination point for ATP. Substrate contacts are provided by residues S144, 161 to 162 (TK), 196 to 197 (ND), 222 to 223 (TN), E249, and E283. The segment at 196 to 434 (NDTVGTLASC…TRFCLRLSED (239 aa)) is hexokinase large subdomain. Residues 288 to 289 (GM), 325 to 329 (TRYLT), and 401 to 405 (SLYKF) contribute to the ATP site.

Belongs to the hexokinase family. In terms of assembly, monomer.

It carries out the reaction a D-hexose + ATP = a D-hexose 6-phosphate + ADP + H(+). The catalysed reaction is D-mannose + ATP = D-mannose 6-phosphate + ADP + H(+). The enzyme catalyses D-fructose + ATP = D-fructose 6-phosphate + ADP + H(+). It catalyses the reaction D-glucose + ATP = D-glucose 6-phosphate + ADP + H(+). Its pathway is carbohydrate metabolism; hexose metabolism. The protein operates within carbohydrate degradation; glycolysis; D-glyceraldehyde 3-phosphate and glycerone phosphate from D-glucose: step 1/4. Functionally, catalyzes the phosphorylation of various hexoses to hexose 6-phosphate. The protein is Hexokinase of Schistosoma mansoni (Blood fluke).